Reading from the N-terminus, the 434-residue chain is Methylenetetrahydrofolate--tRNA-(uracil-5-)-methyltransferase TrmFO (434 aa).

Residue Gly9–Gly14 coordinates FAD.

This sequence belongs to the MnmG family. TrmFO subfamily. Requires FAD as cofactor.

The protein resides in the cytoplasm. The enzyme catalyses uridine(54) in tRNA + (6R)-5,10-methylene-5,6,7,8-tetrahydrofolate + NADH + H(+) = 5-methyluridine(54) in tRNA + (6S)-5,6,7,8-tetrahydrofolate + NAD(+). It carries out the reaction uridine(54) in tRNA + (6R)-5,10-methylene-5,6,7,8-tetrahydrofolate + NADPH + H(+) = 5-methyluridine(54) in tRNA + (6S)-5,6,7,8-tetrahydrofolate + NADP(+). In terms of biological role, catalyzes the folate-dependent formation of 5-methyl-uridine at position 54 (M-5-U54) in all tRNAs. In Geobacter sulfurreducens (strain ATCC 51573 / DSM 12127 / PCA), this protein is Methylenetetrahydrofolate--tRNA-(uracil-5-)-methyltransferase TrmFO.